The chain runs to 361 residues: NudC domain-containing protein 3 (361 aa).

Basic and acidic residues predominate over residues 87 to 97; the sequence is KIRRKEEEEAK. A disordered region spans residues 87–106; that stretch reads KIRRKEEEEAKTVSAAAAEK. S146 carries the post-translational modification Phosphoserine. Residues 185-277 form the CS domain; that stretch reads AVRENYTWSQ…VGEYWWNAIL (93 aa). 2 positions are modified to phosphoserine: S340 and S355.

The chain is NudC domain-containing protein 3 (NUDCD3) from Pongo abelii (Sumatran orangutan).